Consider the following 178-residue polypeptide: TM2 domain-containing protein biscotti (178 aa).

Residues 1 to 18 (MFPVLLLLLFFFAKETHQ) form the signal peptide. At 19–99 (INVDCNELQM…YHLDTTLLLS (81 aa)) the chain is on the extracellular side. N-linked (GlcNAc...) asparagine glycosylation is found at Asn69 and Asn75. The 44-residue stretch at 94–137 (TTLLLSVFLGMFGVDRFYLGYPGIGLLKFCTLGGMFLGQLIDIV) folds into the TM2 domain. The chain crosses the membrane as a helical span at residues 100-120 (VFLGMFGVDRFYLGYPGIGLL). Over 121–124 (KFCT) the chain is Cytoplasmic. Residues 125–145 (LGGMFLGQLIDIVLIALQVVG) traverse the membrane as a helical segment. Topologically, residues 146-178 (PADGSAYVIPYYGAGIHIVRSDNTTYRLPRDDW) are extracellular. Asn168 is a glycosylation site (N-linked (GlcNAc...) asparagine).

Belongs to the TM2 family.

The protein localises to the membrane. Positive regulator of Notch signaling. Maternal neurogenic factor involved in Notch signaling-dependent neuroectodermal specification during early embryogenesis. Functions cooperatively with amx/TM2D3 and amrt/TM2D2. The chain is TM2 domain-containing protein biscotti from Drosophila melanogaster (Fruit fly).